The primary structure comprises 319 residues: tRNA dimethylallyltransferase (319 aa).

11-18 is an ATP binding site; that stretch reads GPTCSGKS. Position 13–18 (13–18) interacts with substrate; sequence TCSGKS. 2 interaction with substrate tRNA regions span residues 36–39 and 160–164; these read DSMQ and QRIAR.

It belongs to the IPP transferase family. Monomer. The cofactor is Mg(2+).

It carries out the reaction adenosine(37) in tRNA + dimethylallyl diphosphate = N(6)-dimethylallyladenosine(37) in tRNA + diphosphate. In terms of biological role, catalyzes the transfer of a dimethylallyl group onto the adenine at position 37 in tRNAs that read codons beginning with uridine, leading to the formation of N6-(dimethylallyl)adenosine (i(6)A). This chain is tRNA dimethylallyltransferase, found in Granulibacter bethesdensis (strain ATCC BAA-1260 / CGDNIH1).